The chain runs to 502 residues: Chromatin structure-remodeling complex protein RSC58 (502 aa).

Residues serine 19–glutamate 134 form the Bromo domain. The tract at residues asparagine 336–glutamate 378 is disordered. Residues glycine 339–aspartate 353 are compositionally biased toward basic and acidic residues.

Component of the two forms of the RSC complex composed of at least either RSC1 or RSC2, and ARP7, ARP9, LDB7, NPL6, RSC3, RSC30, RSC4, RSC58, RSC6, RSC8, RSC9, SFH1, STH1, HTL1 and probably RTT102. The complexes interact with histone and histone variant components of centromeric chromatin.

It localises to the nucleus. Component of the chromatin structure-remodeling complex (RSC), which is involved in transcription regulation and nucleosome positioning. RSC is responsible for the transfer of a histone octamer from a nucleosome core particle to naked DNA. The reaction requires ATP and involves an activated RSC-nucleosome intermediate. Remodeling reaction also involves DNA translocation, DNA twist and conformational change. As a reconfigurer of centromeric and flanking nucleosomes, RSC complex is required both for proper kinetochore function in chromosome segregation and, via a PKC1-dependent signaling pathway, for organization of the cellular cytoskeleton. This Saccharomyces cerevisiae (strain ATCC 204508 / S288c) (Baker's yeast) protein is Chromatin structure-remodeling complex protein RSC58 (RSC58).